Here is a 276-residue protein sequence, read N- to C-terminus: Mitochondrial outer membrane protein porin of 34 kDa (276 aa).

Belongs to the eukaryotic mitochondrial porin (TC 1.B.8.1) family.

The protein resides in the mitochondrion outer membrane. Functionally, forms a channel through the cell membrane that allows diffusion of small hydrophilic molecules. The channel adopts an open conformation at low or zero membrane potential and a closed conformation at potentials above 30-40 mV. The open state has a weak anion selectivity whereas the closed state is cation-selective. The polypeptide is Mitochondrial outer membrane protein porin of 34 kDa (Solanum tuberosum (Potato)).